The primary structure comprises 356 residues: Homoserine O-succinyltransferase (356 aa).

The active-site Acyl-thioester intermediate is Cys146. Substrate is bound by residues Lys167 and Ser196. His239 serves as the catalytic Proton acceptor. Glu241 is a catalytic residue. Arg253 contributes to the substrate binding site.

The protein belongs to the MetA family.

It localises to the cytoplasm. It catalyses the reaction L-homoserine + succinyl-CoA = O-succinyl-L-homoserine + CoA. Its pathway is amino-acid biosynthesis; L-methionine biosynthesis via de novo pathway; O-succinyl-L-homoserine from L-homoserine: step 1/1. Transfers a succinyl group from succinyl-CoA to L-homoserine, forming succinyl-L-homoserine. This chain is Homoserine O-succinyltransferase, found in Thioalkalivibrio nitratireducens (strain DSM 14787 / UNIQEM 213 / ALEN2).